A 227-amino-acid polypeptide reads, in one-letter code: PKHD-type hydroxylase Dtpsy_0528 (227 aa).

Positions 78 to 178 constitute a Fe2OG dioxygenase domain; that stretch reads TIYPPKFNRY…RVASFFWIES (101 aa). Fe cation-binding residues include histidine 96, aspartate 98, and histidine 159. Arginine 169 lines the 2-oxoglutarate pocket.

It depends on Fe(2+) as a cofactor. L-ascorbate serves as cofactor.

In Acidovorax ebreus (strain TPSY) (Diaphorobacter sp. (strain TPSY)), this protein is PKHD-type hydroxylase Dtpsy_0528.